We begin with the raw amino-acid sequence, 637 residues long: Chaperone protein HtpG (637 aa).

Residues 1-335 (MQGTVNSERL…SSDLPLNISR (335 aa)) form an a; substrate-binding region. Residues 336–559 (ETLQNNKIIE…DGSMDIRMER (224 aa)) are b. The segment at 560–637 (FLREQKQLNY…RMNSVLSQIN (78 aa)) is c.

This sequence belongs to the heat shock protein 90 family. As to quaternary structure, homodimer.

It is found in the cytoplasm. Molecular chaperone. Has ATPase activity. The polypeptide is Chaperone protein HtpG (Ehrlichia ruminantium (strain Gardel)).